Reading from the N-terminus, the 835-residue chain is Leucine--tRNA ligase (835 aa).

Residues 36–46 carry the 'HIGH' region motif; it reads PYPSGKIHVGH. The short motif at 602–606 is the 'KMSKS' region element; the sequence is KMSKS. Lys605 is a binding site for ATP.

Belongs to the class-I aminoacyl-tRNA synthetase family.

It is found in the cytoplasm. The enzyme catalyses tRNA(Leu) + L-leucine + ATP = L-leucyl-tRNA(Leu) + AMP + diphosphate. This Rickettsia felis (strain ATCC VR-1525 / URRWXCal2) (Rickettsia azadi) protein is Leucine--tRNA ligase.